A 115-amino-acid polypeptide reads, in one-letter code: T cell receptor beta variable 11-3 (115 aa).

The N-terminal stretch at 1–21 is a signal peptide; the sequence is MGTRLLCWVAFCLLVEELIEA. The Ig-like domain maps to 22-115; sequence GVVQSPRYKI…SAVYLCASSL (94 aa). The cysteines at positions 42 and 111 are disulfide-linked.

In terms of assembly, alpha-beta TR is a heterodimer composed of an alpha and beta chain; disulfide-linked. The alpha-beta TR is associated with the transmembrane signaling CD3 coreceptor proteins to form the TR-CD3 (TcR or TCR). The assembly of alpha-beta TR heterodimers with CD3 occurs in the endoplasmic reticulum where a single alpha-beta TR heterodimer associates with one CD3D-CD3E heterodimer, one CD3G-CD3E heterodimer and one CD247 homodimer forming a stable octameric structure. CD3D-CD3E and CD3G-CD3E heterodimers preferentially associate with TR alpha and TR beta chains, respectively. The association of the CD247 homodimer is the last step of TcR assembly in the endoplasmic reticulum and is required for transport to the cell surface.

It is found in the cell membrane. V region of the variable domain of T cell receptor (TR) beta chain that participates in the antigen recognition. Alpha-beta T cell receptors are antigen specific receptors which are essential to the immune response and are present on the cell surface of T lymphocytes. Recognize peptide-major histocompatibility (MH) (pMH) complexes that are displayed by antigen presenting cells (APC), a prerequisite for efficient T cell adaptive immunity against pathogens. Binding of alpha-beta TR to pMH complex initiates TR-CD3 clustering on the cell surface and intracellular activation of LCK that phosphorylates the ITAM motifs of CD3G, CD3D, CD3E and CD247 enabling the recruitment of ZAP70. In turn ZAP70 phosphorylates LAT, which recruits numerous signaling molecules to form the LAT signalosome. The LAT signalosome propagates signal branching to three major signaling pathways, the calcium, the mitogen-activated protein kinase (MAPK) kinase and the nuclear factor NF-kappa-B (NF-kB) pathways, leading to the mobilization of transcription factors that are critical for gene expression and essential for T cell growth and differentiation. The T cell repertoire is generated in the thymus, by V-(D)-J rearrangement. This repertoire is then shaped by intrathymic selection events to generate a peripheral T cell pool of self-MH restricted, non-autoaggressive T cells. Post-thymic interaction of alpha-beta TR with the pMH complexes shapes TR structural and functional avidity. The chain is T cell receptor beta variable 11-3 from Homo sapiens (Human).